Reading from the N-terminus, the 342-residue chain is MAEYDHYEDNGFNSFNDSSQEEHQDFLQFSKVFLPCMYLVVFVCGLVGNSLVLVISIFYHKLQSLTDVFLVNLPLADLVFVCTLPFWAYAGIHEWIFGQVMCKTLLGIYTINFYTSMLILTCITVDRFIVVVKATKAYNQQAKKMTWGKVICLLIWVISLLVSLPQIIYGNVFNLDKLICGYHDEEISTVVLATQMTLGFFLPLLAMIVCYSVIIKTLLHAGGFQKHRSLKIIFLVMAVFLLTQTPFNLVKLIRSTHWEYYAMTSFHYTIIVTEAIAYLRACLNPVLYAFVSLKFRKNFWKLVKDIGCLPYLGVSHQWKSSEDNSKTFSASHNVEATSMFQL.

Topologically, residues M1–V32 are extracellular. N16 carries an N-linked (GlcNAc...) asparagine glycan. The helical transmembrane segment at F33–Y59 threads the bilayer. At H60–V68 the chain is on the cytoplasmic side. Residues F69–Y89 traverse the membrane as a helical segment. The Extracellular segment spans residues A90–K103. A disulfide bridge connects residues C102 and C180. A helical transmembrane segment spans residues T104–V125. The Cytoplasmic portion of the chain corresponds to D126–K143. A helical membrane pass occupies residues K144–L164. Residues P165–I187 lie on the Extracellular side of the membrane. A helical membrane pass occupies residues S188–I215. Residues K216–K231 are Cytoplasmic-facing. A helical transmembrane segment spans residues I232–E259. Residues Y260–A275 are Extracellular-facing. Residues I276–L293 form a helical membrane-spanning segment. At K294–L342 the chain is on the cytoplasmic side.

The protein belongs to the G-protein coupled receptor 1 family.

Its subcellular location is the cell membrane. Its function is as follows. Receptor for the C-X-C chemokine CXCL16. Used as a coreceptor by SIVs and by strains of HIV-2 and m-tropic HIV-1. This Chlorocebus aethiops (Green monkey) protein is C-X-C chemokine receptor type 6 (CXCR6).